A 204-amino-acid chain; its full sequence is Holliday junction branch migration complex subunit RuvA (204 aa).

The interval 1 to 64 (MIGRLQGKLI…EDAHLLFGFS (64 aa)) is domain I. Positions 65–143 (TKTDRTLFRE…GLRQPDFFVE (79 aa)) are domain II. A flexible linker region spans residues 144 to 155 (SKHITVPDIVSA). The tract at residues 156–204 (EKETPNDEAVAALVALGYKPPEAAKMVKKVANGDLTSEQLIREALKAAL) is domain III.

It belongs to the RuvA family. As to quaternary structure, homotetramer. Forms an RuvA(8)-RuvB(12)-Holliday junction (HJ) complex. HJ DNA is sandwiched between 2 RuvA tetramers; dsDNA enters through RuvA and exits via RuvB. An RuvB hexamer assembles on each DNA strand where it exits the tetramer. Each RuvB hexamer is contacted by two RuvA subunits (via domain III) on 2 adjacent RuvB subunits; this complex drives branch migration. In the full resolvosome a probable DNA-RuvA(4)-RuvB(12)-RuvC(2) complex forms which resolves the HJ.

It localises to the cytoplasm. The RuvA-RuvB-RuvC complex processes Holliday junction (HJ) DNA during genetic recombination and DNA repair, while the RuvA-RuvB complex plays an important role in the rescue of blocked DNA replication forks via replication fork reversal (RFR). RuvA specifically binds to HJ cruciform DNA, conferring on it an open structure. The RuvB hexamer acts as an ATP-dependent pump, pulling dsDNA into and through the RuvAB complex. HJ branch migration allows RuvC to scan DNA until it finds its consensus sequence, where it cleaves and resolves the cruciform DNA. The chain is Holliday junction branch migration complex subunit RuvA from Actinobacillus succinogenes (strain ATCC 55618 / DSM 22257 / CCUG 43843 / 130Z).